The primary structure comprises 145 residues: Large ribosomal subunit protein uL11 (145 aa).

This sequence belongs to the universal ribosomal protein uL11 family. In terms of assembly, part of the ribosomal stalk of the 50S ribosomal subunit. Interacts with L10 and the large rRNA to form the base of the stalk. L10 forms an elongated spine to which L12 dimers bind in a sequential fashion forming a multimeric L10(L12)X complex. In terms of processing, one or more lysine residues are methylated.

Its function is as follows. Forms part of the ribosomal stalk which helps the ribosome interact with GTP-bound translation factors. The protein is Large ribosomal subunit protein uL11 of Rickettsia canadensis (strain McKiel).